The primary structure comprises 194 residues: MPKGRKPKGPVEKKVIHPYSRKAAYLARDAIKQERKEKLKGEKAQRLNLVGEKLLWFQNQLNPDKPEYTRQDACEITERYLQRFDGELEQIELANSIKGRQGRQHSSREAIIKQTIERERAQYEGNGFEIPDIINAKHLKIFREWNGDLKKLPCIKMRKLSAKGSDSKPSTVSQDTHMEEENEEDKSLDSDSDL.

The interval leucine 160–leucine 194 is disordered. Positions aspartate 185–leucine 194 are enriched in basic and acidic residues.

It belongs to the TMA16 family. As to quaternary structure, associates with pre-60S ribosomal particles.

The protein localises to the nucleus. In terms of biological role, involved in the biogenesis of the 60S ribosomal subunit in the nucleus. The chain is Translation machinery-associated protein 16 (tma16) from Danio rerio (Zebrafish).